Reading from the N-terminus, the 384-residue chain is Guanine nucleotide-binding protein alpha-1 subunit (384 aa).

Positions 1–22 (MGSLCSRNKHYSQADDEENTQT) are disordered. Glycine 2 is lipidated: N-myristoyl glycine. A lipid anchor (S-palmitoyl cysteine) is attached at cysteine 5. One can recognise a G-alpha domain in the interval 38 to 384 (HIQKLLLLGA…RRNLFEAGLL (347 aa)). The interval 41–54 (KLLLLGAGDSGKST) is G1 motif. 14 residues coordinate GTP: aspartate 49, serine 50, glycine 51, lysine 52, serine 53, threonine 54, aspartate 163, leucine 188, threonine 194, glycine 222, asparagine 288, lysine 289, aspartate 291, and alanine 356. A Mg(2+)-binding site is contributed by serine 53. The tract at residues 186 to 194 (DVLFARIRT) is G2 motif. Threonine 194 serves as a coordination point for Mg(2+). The G3 motif stretch occupies residues 215 to 224 (YRLFDVGGQR). The segment at 284–291 (MLFLNKFD) is G4 motif. The tract at residues 354–359 (TTALDQ) is G5 motif.

Belongs to the G-alpha family. As to quaternary structure, g proteins are composed of 3 units; alpha, beta and gamma. The alpha chain contains the guanine nucleotide binding site. It depends on Mg(2+) as a cofactor.

Functionally, guanine nucleotide-binding proteins (G proteins) are involved as modulators or transducers in various transmembrane signaling systems. The protein is Guanine nucleotide-binding protein alpha-1 subunit (GPA1) of Solanum lycopersicum (Tomato).